Reading from the N-terminus, the 220-residue chain is MAIIMAESSYERRVKALYEKQIRMETLEGKFIKKVFKFNSILLDVKEAAARHQRKVEKMQKVVIERREELEKRVSFMGQLAQEVEATKLRNLAMKDRIKQQKMLARERNNEIMERIHTLSKTTGTYVNQEALPARVKGVTVLRGDKRDQLIPFDLNATDAEGLNSLCQHLESLNVDVSQWQQLVSLVMDVTMEARAPTTPPKEAANCKSIIEIDLTSPTS.

Positions 41-119 (ILLDVKEAAA…NEIMERIHTL (79 aa)) form a coiled coil.

It belongs to the SPC25 family. In terms of assembly, component of the Ndc80 complex, which is composed of Ndc80, Nuf2 and Spc25.

The protein localises to the nucleus. Its subcellular location is the chromosome. The protein resides in the centromere. It is found in the kinetochore. Its function is as follows. Acts as a component of the essential kinetochore-associated Ndc80 complex, which is required for chromosome segregation and spindle checkpoint activity during meiosis and mitosis. Required for kinetochore integrity and the organization of stable microtubule binding sites in the outer plate of the kinetochore. Participates in SAC signaling that responds specifically to disruptions in spindle microtubule dynamics. The NDC80 complex synergistically enhances the affinity of the SKA1 complex for microtubules and may allow the NDC80 complex to track depolymerizing microtubules. The protein is Kinetochore protein Spc25 of Drosophila erecta (Fruit fly).